The primary structure comprises 58 residues: Large ribosomal subunit protein uL30 (58 aa).

Belongs to the universal ribosomal protein uL30 family. Part of the 50S ribosomal subunit.

This chain is Large ribosomal subunit protein uL30, found in Wigglesworthia glossinidia brevipalpis.